A 378-amino-acid chain; its full sequence is UDP-4-amino-4-deoxy-L-arabinose--oxoglutarate aminotransferase (378 aa).

Lys182 carries the post-translational modification N6-(pyridoxal phosphate)lysine.

The protein belongs to the DegT/DnrJ/EryC1 family. ArnB subfamily. As to quaternary structure, homodimer. It depends on pyridoxal 5'-phosphate as a cofactor.

It carries out the reaction UDP-4-amino-4-deoxy-beta-L-arabinose + 2-oxoglutarate = UDP-beta-L-threo-pentopyranos-4-ulose + L-glutamate. The protein operates within nucleotide-sugar biosynthesis; UDP-4-deoxy-4-formamido-beta-L-arabinose biosynthesis; UDP-4-deoxy-4-formamido-beta-L-arabinose from UDP-alpha-D-glucuronate: step 2/3. It participates in bacterial outer membrane biogenesis; lipopolysaccharide biosynthesis. In terms of biological role, catalyzes the conversion of UDP-4-keto-arabinose (UDP-Ara4O) to UDP-4-amino-4-deoxy-L-arabinose (UDP-L-Ara4N). The modified arabinose is attached to lipid A and is required for resistance to polymyxin and cationic antimicrobial peptides. In Aeromonas salmonicida (strain A449), this protein is UDP-4-amino-4-deoxy-L-arabinose--oxoglutarate aminotransferase.